Consider the following 652-residue polypeptide: DNA ligase (652 aa).

Residues 29 to 33 (DSQYD), 78 to 79 (SL), and E107 contribute to the NAD(+) site. K109 functions as the N6-AMP-lysine intermediate in the catalytic mechanism. Residues R130, E164, K278, and K302 each coordinate NAD(+). Residues C395, C398, C413, and C418 each contribute to the Zn(2+) site. The BRCT domain maps to 577–652 (STDAQLSGLT…IQDEDWLLNL (76 aa)).

The protein belongs to the NAD-dependent DNA ligase family. LigA subfamily. It depends on Mg(2+) as a cofactor. The cofactor is Mn(2+).

The catalysed reaction is NAD(+) + (deoxyribonucleotide)n-3'-hydroxyl + 5'-phospho-(deoxyribonucleotide)m = (deoxyribonucleotide)n+m + AMP + beta-nicotinamide D-nucleotide.. Its function is as follows. DNA ligase that catalyzes the formation of phosphodiester linkages between 5'-phosphoryl and 3'-hydroxyl groups in double-stranded DNA using NAD as a coenzyme and as the energy source for the reaction. It is essential for DNA replication and repair of damaged DNA. The sequence is that of DNA ligase from Streptococcus agalactiae serotype V (strain ATCC BAA-611 / 2603 V/R).